The following is a 348-amino-acid chain: Fe(3+) ions import ATP-binding protein FbpC (348 aa).

In terms of domain architecture, ABC transporter spans 7–237; it reads VELRNVTKRF…PASRFMASFM (231 aa). 39-46 is an ATP binding site; the sequence is GPSGCGKT.

Belongs to the ABC transporter superfamily. Fe(3+) ion importer (TC 3.A.1.10) family. In terms of assembly, the complex is composed of two ATP-binding proteins (FbpC), two transmembrane proteins (FbpB) and a solute-binding protein (FbpA).

It localises to the cell inner membrane. The enzyme catalyses Fe(3+)(out) + ATP + H2O = Fe(3+)(in) + ADP + phosphate + H(+). Part of the ABC transporter complex FbpABC involved in Fe(3+) ions import. Responsible for energy coupling to the transport system. The sequence is that of Fe(3+) ions import ATP-binding protein FbpC from Escherichia coli O157:H7.